The primary structure comprises 1679 residues: MEGTTNKDIGSGSSRPGGEVSVSDEIQRRFMEKKWVWAPSSKEAYVCGFVVKEEGDVLEIDCRGVIVRHKSCEVFRMNPPKFDMVDDLAELSYLNEPGVLHNLRRRYQNGRIYTYSGLFLLAINPYKDLRIYGEKDARKYTLSKKYELEPHIFAVANEAYRLMLSNRENQSILITGESGAGKTENTKRVVEFLAMVGGCKGMEVSIDRQIIDANPILEAFGNAQTVKNDNSSRFGKFIKIKFNGGNICGAHIEKYLLEKSRVTSQNRNERNYHIFYQLLGCDDQMLKKQLFLDGEPKDYRFLKDSRFKIPDVDDAKEFRSLRESMRVLGIGEEEQIGYFKIVSAILHLGNIEFREKDGAAEIANLDVAEKACKLLSIPLAEFIKRLIHPVIKAGNEYVAHSRSREQALKIVDGLSRILYDKMFEGVIDRINMSLDSPHKGNFIGVLDIAGFEIFEKNSFEQLCINYTNEKLQQFFNHHMFILEQEVYRQENIEWDFIDFGLDLQPTIDLIEKSNPIGILSYLDEECVMPMATEKTFLGKLMKNIRDEKFEVDKIRDAFVLNHYAGDVEYTVDDWLSKNKDSHSEALTSLIRASGSELVSRLSLNEEAVKKGFFRTVSQKHKEQLASLMSELRRTNPHFVRCIIPNLEKSGEHLDNGIVLGQLKCNGVLEGIRISRQGFPSRMGHREFVQRYRIMMKEKILVDESWDEGVCMELYKEIGGKILSEIGISTSQYRLGRTKVFFRQGVLADIEDMRDVKVSEVVKEIQALIRRRLAFRKYNQAQRRMQGILVIQRNGRICCDLQRWNWWRLYLKIKPLLDVRKRDGEMKEKEAMIQEYARMLDAEKSRREEVEDMLKAMSLKRELLEKSVEDEKRFSMEKDELLMALRYKSDETAQELEKARKEVFDGHEERKMWETRVNEVAIQLEEKDSEILRLRREVSEQKGALSQQEKEICSLREEVVSKLSEKDAMVEKMLRERDSEVQALKEKVKEKDAEVERILEGMKRMEREGEERNRMLKENESTIDELRTRCLNMKRWKDEYAELREDYEALQKKLKDEVEDMQVENDRLHNEIRKISKEREELGRMQKKLLDDLEFERNRGSKLEKAFQELRGEYEAVEGQLQKERQFRDSTQESLLEKTRGLERRVKSLNEKLRREEMANRQLMSEKDEMYREIHVLQQSKLDEIFDREAGFNSIKKNLQMEIQRLEMENQRLSVDLMEAKCMGEASEESISATERFCGMLEEERKKRKEIEYQASEHENRNVILSSEVEMLREMVEMERRSKEEVIRGHEKETGLCKAIAGVRKEVEDLGNEIDMAIEGFNGMYLNVLDGYKRDLKECKEQVMSKEQVIEELNGRIVRLGREVEERKEIEEEMSRKVHGLMKQYNGVMNDFSLLSTKCSSLERTVSEKEEEIKGYSERCSEYDKRFEGLVCRVDEEIENLRRSDEERRRCVEKLESGLNGSIAGIRKLDERYKARIEECAQSVLDGERRKLKAMEELCEQLSKKLGELEEEHQGLLDEKMKGLLRIEQLEGELCAFRESEVHRQDMISMYESEISTLKRCTRFKDEVLGSLSGERNPVVVHVSDKEKCQVLDRKRMTVEHELARANDERQSLMAINKKLREEVEKLRGEIDAGRSKMLEMKKKLGCQSLAVGHLSRELEEEREMVRFFRTLGGARKKKV.

Positions 1 to 14 (MEGTTNKDIGSGSS) are enriched in polar residues. The segment at 1–22 (MEGTTNKDIGSGSSRPGGEVSV) is disordered. Residues 31–79 (MEKKWVWAPSSKEAYVCGFVVKEEGDVLEIDCRGVIVRHKSCEVFRMNP) form the Myosin N-terminal SH3-like domain. The Myosin motor domain maps to 83–754 (DMVDDLAELS…VLADIEDMRD (672 aa)). Residue 176 to 183 (GESGAGKT) coordinates ATP. The segment at 624-646 (LASLMSELRRTNPHFVRCIIPNL) is actin-binding. A coiled-coil region spans residues 823-1644 (GEMKEKEAMI…SKMLEMKKKL (822 aa)).

This sequence belongs to the TRAFAC class myosin-kinesin ATPase superfamily. Myosin family.

Cellular myosin that appears to play a role in cytokinesis, cell shape, and specialized functions such as secretion and capping. The chain is Probable myosin heavy chain ECU04_1000 from Encephalitozoon cuniculi (strain GB-M1) (Microsporidian parasite).